A 298-amino-acid chain; its full sequence is MVVKPEWLRVKAPQWQRVGSVKELLRDLNLNTVCEEASCPNIGECFYQGTATFLMMGPACTRACPYCDIDFEKKPLPLDPTEPQRLAEAVVRMRLNHVVITSVNRDDLADGGASQFVATIEAVRQRSPQTTIEVLIPDLCGNWQALDQILAAGPEVLNHNTETVPRLYRRVRPQGNYQRSLELLQRVRDRAPWIYSKSGIMVGLGETSEEVVALMQDLRQVGCDILTIGQYLQPSPKHLAVQAFIPPEQFEEWRRLGESMGFLQVVSSPLTRSSYHAEQVRALMQQYPRQRPAPSPLG.

[4Fe-4S] cluster contacts are provided by cysteine 34, cysteine 39, cysteine 45, cysteine 60, cysteine 64, cysteine 67, and serine 274. Residues 46–263 (FYQGTATFLM…RRLGESMGFL (218 aa)) enclose the Radical SAM core domain.

The protein belongs to the radical SAM superfamily. Lipoyl synthase family. It depends on [4Fe-4S] cluster as a cofactor.

The protein localises to the cytoplasm. It catalyses the reaction [[Fe-S] cluster scaffold protein carrying a second [4Fe-4S](2+) cluster] + N(6)-octanoyl-L-lysyl-[protein] + 2 oxidized [2Fe-2S]-[ferredoxin] + 2 S-adenosyl-L-methionine + 4 H(+) = [[Fe-S] cluster scaffold protein] + N(6)-[(R)-dihydrolipoyl]-L-lysyl-[protein] + 4 Fe(3+) + 2 hydrogen sulfide + 2 5'-deoxyadenosine + 2 L-methionine + 2 reduced [2Fe-2S]-[ferredoxin]. It participates in protein modification; protein lipoylation via endogenous pathway; protein N(6)-(lipoyl)lysine from octanoyl-[acyl-carrier-protein]: step 2/2. Catalyzes the radical-mediated insertion of two sulfur atoms into the C-6 and C-8 positions of the octanoyl moiety bound to the lipoyl domains of lipoate-dependent enzymes, thereby converting the octanoylated domains into lipoylated derivatives. The sequence is that of Lipoyl synthase 1 from Thermosynechococcus vestitus (strain NIES-2133 / IAM M-273 / BP-1).